A 263-amino-acid polypeptide reads, in one-letter code: Stress-response A/B barrel domain-containing protein UP3 (263 aa).

Stress-response A/B barrel domains follow at residues 49–142 (IEHI…AVDW) and 158–252 (VAKL…VVEF). The Peroxisomal targeting signal signature appears at 261 to 263 (SSL).

In terms of assembly, homodimer.

The protein resides in the peroxisome. In terms of biological role, involved in stress response. The protein is Stress-response A/B barrel domain-containing protein UP3 of Arabidopsis thaliana (Mouse-ear cress).